Reading from the N-terminus, the 214-residue chain is ATP phosphoribosyltransferase (214 aa).

Belongs to the ATP phosphoribosyltransferase family. Short subfamily. In terms of assembly, heteromultimer composed of HisG and HisZ subunits.

It is found in the cytoplasm. The enzyme catalyses 1-(5-phospho-beta-D-ribosyl)-ATP + diphosphate = 5-phospho-alpha-D-ribose 1-diphosphate + ATP. It functions in the pathway amino-acid biosynthesis; L-histidine biosynthesis; L-histidine from 5-phospho-alpha-D-ribose 1-diphosphate: step 1/9. Catalyzes the condensation of ATP and 5-phosphoribose 1-diphosphate to form N'-(5'-phosphoribosyl)-ATP (PR-ATP). Has a crucial role in the pathway because the rate of histidine biosynthesis seems to be controlled primarily by regulation of HisG enzymatic activity. In Azoarcus sp. (strain BH72), this protein is ATP phosphoribosyltransferase.